A 403-amino-acid polypeptide reads, in one-letter code: NADH-quinone oxidoreductase subunit D (403 aa).

The protein belongs to the complex I 49 kDa subunit family. In terms of assembly, NDH-1 is composed of 14 different subunits. Subunits NuoB, C, D, E, F, and G constitute the peripheral sector of the complex.

The protein localises to the cell inner membrane. The enzyme catalyses a quinone + NADH + 5 H(+)(in) = a quinol + NAD(+) + 4 H(+)(out). Its function is as follows. NDH-1 shuttles electrons from NADH, via FMN and iron-sulfur (Fe-S) centers, to quinones in the respiratory chain. The immediate electron acceptor for the enzyme in this species is believed to be ubiquinone. Couples the redox reaction to proton translocation (for every two electrons transferred, four hydrogen ions are translocated across the cytoplasmic membrane), and thus conserves the redox energy in a proton gradient. This is NADH-quinone oxidoreductase subunit D from Ruegeria sp. (strain TM1040) (Silicibacter sp.).